Reading from the N-terminus, the 372-residue chain is Glutamate 5-kinase (372 aa).

K14 is an ATP binding site. 3 residues coordinate substrate: S54, D141, and N153. Residue T173 to D174 participates in ATP binding. The 79-residue stretch at R280–M358 folds into the PUA domain.

This sequence belongs to the glutamate 5-kinase family.

It is found in the cytoplasm. It catalyses the reaction L-glutamate + ATP = L-glutamyl 5-phosphate + ADP. It functions in the pathway amino-acid biosynthesis; L-proline biosynthesis; L-glutamate 5-semialdehyde from L-glutamate: step 1/2. Functionally, catalyzes the transfer of a phosphate group to glutamate to form L-glutamate 5-phosphate. This chain is Glutamate 5-kinase, found in Pseudomonas fluorescens (strain ATCC BAA-477 / NRRL B-23932 / Pf-5).